A 72-amino-acid polypeptide reads, in one-letter code: uncharacterized protein (72 aa).

This is an uncharacterized protein from Escherichia coli (strain K12).